We begin with the raw amino-acid sequence, 277 residues long: Large ribosomal subunit protein uL2 (277 aa).

Residues 222–259 (GSVMNPNDHPHGGGEGKSPVGRPSPVTPWGKPALGYKT) are disordered.

This sequence belongs to the universal ribosomal protein uL2 family. In terms of assembly, part of the 50S ribosomal subunit. Forms a bridge to the 30S subunit in the 70S ribosome.

In terms of biological role, one of the primary rRNA binding proteins. Required for association of the 30S and 50S subunits to form the 70S ribosome, for tRNA binding and peptide bond formation. It has been suggested to have peptidyltransferase activity; this is somewhat controversial. Makes several contacts with the 16S rRNA in the 70S ribosome. This is Large ribosomal subunit protein uL2 from Clostridium beijerinckii (strain ATCC 51743 / NCIMB 8052) (Clostridium acetobutylicum).